A 312-amino-acid polypeptide reads, in one-letter code: Protoheme IX farnesyltransferase (312 aa).

8 consecutive transmembrane segments (helical) span residues 31–51 (VMSL…GSFH), 52–72 (PVLA…AGAL), 119–139 (ILVN…YVVI), 152–172 (IVIG…SVTG), 179–199 (ILLF…LALF), 225–245 (ILLY…LGYF), 247–267 (VIYG…AVRV), and 288–308 (ILYL…AAVL).

It belongs to the UbiA prenyltransferase family. Protoheme IX farnesyltransferase subfamily.

The protein localises to the cell inner membrane. It carries out the reaction heme b + (2E,6E)-farnesyl diphosphate + H2O = Fe(II)-heme o + diphosphate. It participates in porphyrin-containing compound metabolism; heme O biosynthesis; heme O from protoheme: step 1/1. Its function is as follows. Converts heme B (protoheme IX) to heme O by substitution of the vinyl group on carbon 2 of heme B porphyrin ring with a hydroxyethyl farnesyl side group. The polypeptide is Protoheme IX farnesyltransferase (Rhodopseudomonas palustris (strain ATCC BAA-98 / CGA009)).